A 185-amino-acid polypeptide reads, in one-letter code: Ribosome-recycling factor (185 aa).

The protein belongs to the RRF family.

It localises to the cytoplasm. Responsible for the release of ribosomes from messenger RNA at the termination of protein biosynthesis. May increase the efficiency of translation by recycling ribosomes from one round of translation to another. This Neisseria meningitidis serogroup A / serotype 4A (strain DSM 15465 / Z2491) protein is Ribosome-recycling factor.